Reading from the N-terminus, the 125-residue chain is Egg cell-secreted protein 1.3 (125 aa).

The N-terminal stretch at 1-24 (MASNTSFLFVTVTLLLVLNVSSRA) is a signal peptide.

Belongs to the plant egg cell-secreted peptide family. As to expression, restricted to female reproductive tissues, specifically accumulating in storage vesicles of the unfertilized egg cell.

Its subcellular location is the cytoplasmic vesicle. The protein localises to the secreted. Its function is as follows. Involved in the regulation of gamete interactions during the double fertilization and to prevent multiple-pollen tube attraction; mediates the redistribution of the gamete fusogen HAP2/GCS1 to the cell surface after secretion upon sperm arrival. In Arabidopsis thaliana (Mouse-ear cress), this protein is Egg cell-secreted protein 1.3 (EC1.3).